The chain runs to 156 residues: ATP synthase subunit b (156 aa).

Residues 5–25 traverse the membrane as a helical segment; that stretch reads LTLIGQAIAFAFFVAFCMKFV.

It belongs to the ATPase B chain family. In terms of assembly, F-type ATPases have 2 components, F(1) - the catalytic core - and F(0) - the membrane proton channel. F(1) has five subunits: alpha(3), beta(3), gamma(1), delta(1), epsilon(1). F(0) has three main subunits: a(1), b(2) and c(10-14). The alpha and beta chains form an alternating ring which encloses part of the gamma chain. F(1) is attached to F(0) by a central stalk formed by the gamma and epsilon chains, while a peripheral stalk is formed by the delta and b chains.

The protein resides in the cell inner membrane. Its function is as follows. F(1)F(0) ATP synthase produces ATP from ADP in the presence of a proton or sodium gradient. F-type ATPases consist of two structural domains, F(1) containing the extramembraneous catalytic core and F(0) containing the membrane proton channel, linked together by a central stalk and a peripheral stalk. During catalysis, ATP synthesis in the catalytic domain of F(1) is coupled via a rotary mechanism of the central stalk subunits to proton translocation. Component of the F(0) channel, it forms part of the peripheral stalk, linking F(1) to F(0). The sequence is that of ATP synthase subunit b from Acinetobacter baumannii (strain SDF).